The chain runs to 120 residues: Large ribosomal subunit protein uL22 (120 aa).

The protein belongs to the universal ribosomal protein uL22 family. In terms of assembly, part of the 50S ribosomal subunit.

Functionally, this protein binds specifically to 23S rRNA; its binding is stimulated by other ribosomal proteins, e.g. L4, L17, and L20. It is important during the early stages of 50S assembly. It makes multiple contacts with different domains of the 23S rRNA in the assembled 50S subunit and ribosome. Its function is as follows. The globular domain of the protein is located near the polypeptide exit tunnel on the outside of the subunit, while an extended beta-hairpin is found that lines the wall of the exit tunnel in the center of the 70S ribosome. The polypeptide is Large ribosomal subunit protein uL22 (Borreliella afzelii (strain PKo) (Borrelia afzelii)).